The chain runs to 238 residues: tRNA (guanine-N(7)-)-methyltransferase (238 aa).

Glu-68, Glu-93, Asp-120, and Asp-143 together coordinate S-adenosyl-L-methionine. Asp-143 is a catalytic residue. Residues Lys-147, Asp-179, and 216–219 (TKFE) contribute to the substrate site.

The protein belongs to the class I-like SAM-binding methyltransferase superfamily. TrmB family.

It carries out the reaction guanosine(46) in tRNA + S-adenosyl-L-methionine = N(7)-methylguanosine(46) in tRNA + S-adenosyl-L-homocysteine. It functions in the pathway tRNA modification; N(7)-methylguanine-tRNA biosynthesis. Catalyzes the formation of N(7)-methylguanine at position 46 (m7G46) in tRNA. The sequence is that of tRNA (guanine-N(7)-)-methyltransferase from Marinobacter nauticus (strain ATCC 700491 / DSM 11845 / VT8) (Marinobacter aquaeolei).